We begin with the raw amino-acid sequence, 550 residues long: Leucine-rich repeat, immunoglobulin-like domain and transmembrane domain-containing protein 2 (550 aa).

Positions 1 to 19 (MASVFHYFLLVLVFLDTHA) are cleaved as a signal peptide. The LRRNT domain maps to 23–54 (FCLPGCTCSEESFGRTLQCTSVSLGKIPGNLS). Asn-52 carries N-linked (GlcNAc...) asparagine glycosylation. LRR repeat units follow at residues 80-103 (TLEY…EHLP), 104-125 (ELRE…AFRA), 128-149 (LLRV…ALQF), and 152-173 (SLTY…VFLN). One can recognise an LRRCT domain in the interval 200 to 252 (NPWVCDCRLRGLVQFVKSITLPVILVNSYLICQGPLSKAGQLFHETELSACMK). The Ig-like domain maps to 253–341 (PQISTPSANI…SIGKSNLVIS (89 aa)). A disulfide bridge connects residues Cys-274 and Cys-327. One can recognise a Fibronectin type-III domain in the interval 361–451 (EGNAYIDLRV…QGQCVAFVTG (91 aa)). The helical transmembrane segment at 466 to 486 (VTVVLCVVLLAVPVGAYAWAA) threads the bilayer. The interval 508–550 (SCTPAAPQSKDGSFREHPAVCDDGEGHIDTEGDKEKGGTEDNS) is disordered. Over residues 519 to 550 (GSFREHPAVCDDGEGHIDTEGDKEKGGTEDNS) the composition is skewed to basic and acidic residues.

As to quaternary structure, interacts with LRIT1; may form a heterodimer with LRIT1.

The protein localises to the membrane. This chain is Leucine-rich repeat, immunoglobulin-like domain and transmembrane domain-containing protein 2 (LRIT2), found in Homo sapiens (Human).